We begin with the raw amino-acid sequence, 338 residues long: Probable O-antigen biosynthesis glycosyltransferase WbiN (338 aa).

This sequence belongs to the glycosyltransferase group 1 family. Glycosyltransferase 4 subfamily.

The enzyme catalyses N-acetyl-alpha-D-galactosaminyl-di-trans,octa-cis-undecaprenyl diphosphate + UDP-N-acetyl-alpha-D-galactosamine = alpha-D-GalNAc-(1-&gt;3)-alpha-D-GalNAc-di-trans,octa-cis-undecaprenyl diphosphate + UDP + H(+). It functions in the pathway bacterial outer membrane biogenesis; LPS O-antigen biosynthesis. Its function is as follows. Involved in the assembly of the O-repeating unit during O-antigen biosynthesis. This Escherichia coli protein is Probable O-antigen biosynthesis glycosyltransferase WbiN.